The following is a 325-amino-acid chain: GMP reductase (325 aa).

Cys-173 (thioimidate intermediate) is an active-site residue. Residue 202 to 225 (IIADGGIRSHGDIAKSVRFGATMV) coordinates NADP(+).

It belongs to the IMPDH/GMPR family. GuaC type 2 subfamily.

The enzyme catalyses IMP + NH4(+) + NADP(+) = GMP + NADPH + 2 H(+). In terms of biological role, catalyzes the irreversible NADPH-dependent deamination of GMP to IMP. It functions in the conversion of nucleobase, nucleoside and nucleotide derivatives of G to A nucleotides, and in maintaining the intracellular balance of A and G nucleotides. The protein is GMP reductase of Acidovorax ebreus (strain TPSY) (Diaphorobacter sp. (strain TPSY)).